The primary structure comprises 438 residues: Protein translocase subunit SecY (438 aa).

The chain crosses the membrane as a helical span at residues 1-43 (MKIKPILELIPEVKRPLKGVSFKEKIQWTGLVLILYFILGTID). Residues 44-54 (IYMGGAEMPAM) lie on the Extracellular side of the membrane. Residues 55–62 (FAFWQTVT) constitute an intramembrane region (helical). Residues 55–83 (FAFWQTVTASKMGTLITLGIGPIVTAGII) form a discontinuously helical membrane-spanning segment. An intramembrane segment occupies 63–74 (ASKMGTLITLGI). The segment at residues 75–83 (GPIVTAGII) is an intramembrane region (helical). The Cytoplasmic segment spans residues 84–104 (MQLLVGSELISLDLSKPMNRA). The chain crosses the membrane as a helical span at residues 105-129 (LFQGLQKLFGIFLCFLEAVMFVGAG). The Extracellular portion of the chain corresponds to 130–136 (AFGVVNS). A helical transmembrane segment spans residues 137–161 (TLALILVLQLALGAILVIYLDEIVS). At 162 to 167 (RYGIGS) the chain is on the cytoplasmic side. Residues 168 to 186 (GIGLFIAAGVAQTIFVGAF) form a helical membrane-spanning segment. The Extracellular segment spans residues 187–209 (GAEGYLWKFFSAMSVGSLGIAFE). The chain crosses the membrane as a helical span at residues 210 to 231 (YILPILSTLFVFLVVVYVESIR). At 232-256 (VEIPLAHGRVKGAVGKYPIKFIYVS) the chain is on the cytoplasmic side. Residues 257–278 (NLPVILAAALFANIQLWGMFLD) traverse the membrane as a helical segment. Residues 279–315 (RMGYPILGQYSNGTAVSGIAYYFSTPYGISNIISDPL) lie on the Extracellular side of the membrane. A helical membrane pass occupies residues 316-335 (HAIFYTLMMVIFCILFGLFW). The Cytoplasmic portion of the chain corresponds to 336–378 (VETSGLDAKSMAKKLGNLDMAIKGFRKSQKSIEQRLKRYIKPI). The chain crosses the membrane as a helical span at residues 379–397 (TVMGSAFVGFLAAAADFTG). The Extracellular portion of the chain corresponds to 398 to 400 (ALG). A helical membrane pass occupies residues 401-415 (GGTGVLLTVSIVYRL). At 416 to 438 (YEQLVQEQLSELHPAVAKFVGKR) the chain is on the cytoplasmic side.

Belongs to the SecY/SEC61-alpha family. As to quaternary structure, component of the Sec protein translocase complex. Heterotrimer consisting of alpha (SecY), beta (SecG) and gamma (SecE) subunits. The heterotrimers can form oligomers, although 1 heterotrimer is thought to be able to translocate proteins. Interacts with the ribosome. May interact with SecDF, and other proteins may be involved.

The protein resides in the cell membrane. Its function is as follows. The central subunit of the protein translocation channel SecYEG. Consists of two halves formed by TMs 1-5 and 6-10. These two domains form a lateral gate at the front which open onto the bilayer between TMs 2 and 7, and are clamped together by SecE at the back. The channel is closed by both a pore ring composed of hydrophobic SecY resides and a short helix (helix 2A) on the extracellular side of the membrane which forms a plug. The plug probably moves laterally to allow the channel to open. The ring and the pore may move independently. The polypeptide is Protein translocase subunit SecY (Methanococcus vannielii).